The chain runs to 189 residues: Auxin-responsive protein IAA6 (189 aa).

Positions 13-17 (LRLGL) match the EAR-like (transcriptional repression) motif. Residues 93–178 (IGYVKVSMDG…SCKRLRIVKR (86 aa)) form the PB1 domain.

The protein belongs to the Aux/IAA family. As to quaternary structure, homodimers and heterodimers. Interacts with TPL. As to expression, highly expressed in stems and flowers.

It localises to the nucleus. Functionally, aux/IAA proteins are short-lived transcriptional factors that function as repressors of early auxin response genes at low auxin concentrations. Repression is thought to result from the interaction with auxin response factors (ARFs), proteins that bind to the auxin-responsive promoter element (AuxRE). Formation of heterodimers with ARF proteins may alter their ability to modulate early auxin response genes expression. This Arabidopsis thaliana (Mouse-ear cress) protein is Auxin-responsive protein IAA6 (IAA6).